Reading from the N-terminus, the 896-residue chain is MTDVTIKALASEIQTSVDRLIQQFADAGIRKSADDSVTSQEKQTLLTHLNREHGSAPDKLTLQRKTRSTLNIPGTGGKSKSVQIEVRKKRTFVKRDPQEAERLAAEEQAQREAEEQARREAEEAAKREAQLKAEREAAEQAKREVADKAKREAAEKDKVSNQHTDEMTKTAQAEKIRRENEAAELKRKSEEEARRKLEEEARRVAEEARRMAEENEKNWSETSDSPEDSSDYHVTTSQHARQAEDDNDREVEGGRGRSRSSKAARPAKKGNKHAESKADREEARAAVRGGKGGKHRKGSALQQGFQKPAQAVNRDVVIGETITVGELANKMAVKGSQVIKAMMKLGAMATINQVIDQETAQLVAEEMGHKVILRRENELEEAVMSDRDTGAAAEPRAPVVTIMGHVDHGKTSLLDYIRSTKVASGEAGGITQHIGAYHVETDNGMITFLDTPGHAAFTSMRARGAQATDIVVLVVAADDGVMPQTIEAIQHAKAAQVPVVVAVNKIDKPEADPDRVKNELSQYGILPEEWGGESQFVHVSAKAGTGIDDLLDAILLQAEVLELKAVRNGMASGAVIESFLDKGRGPVATVLVREGTLHKGDIVLCGFEYGRVRAMRDELGREVLEAGPSIPVEILGLSGVPAAGDEVTVVRDEKKAREVALYRQGKFREVKLARQQKSKLENMFANMTEGEVHEVNIVLKADVQGSVEAISDSLLKLSTDEVKVKIIGSGVGGITETDATLAAASNAILVGFNVRADASARKVIEAESLDLRYYSVIYNLIDEVKAAMSGMLSPELKQQIIGLAEVRDVFKSPKFGAIAGCMVTEGTIKRHNPIRVLRDNVVIYEGELESLRRFKDDVNEVRNGMECGIGVKNYNDVRVGDMIEVFEIIEIQRSID.

The segment covering 93 to 219 (VKRDPQEAER…RMAEENEKNW (127 aa)) has biased composition (basic and acidic residues). A disordered region spans residues 93 to 307 (VKRDPQEAER…GSALQQGFQK (215 aa)). The span at 256–271 (GRSRSSKAARPAKKGN) shows a compositional bias: basic residues. A compositionally biased stretch (basic and acidic residues) spans 272–285 (KHAESKADREEARA). The 170-residue stretch at 395-564 (PRAPVVTIMG…LLQAEVLELK (170 aa)) folds into the tr-type G domain. Positions 404 to 411 (GHVDHGKT) are G1. Position 404–411 (404–411 (GHVDHGKT)) interacts with GTP. Positions 429–433 (GITQH) are G2. The tract at residues 450–453 (DTPG) is G3. GTP contacts are provided by residues 450–454 (DTPGH) and 504–507 (NKID). Positions 504–507 (NKID) are G4. The interval 540–542 (SAK) is G5.

The protein belongs to the TRAFAC class translation factor GTPase superfamily. Classic translation factor GTPase family. IF-2 subfamily.

It localises to the cytoplasm. One of the essential components for the initiation of protein synthesis. Protects formylmethionyl-tRNA from spontaneous hydrolysis and promotes its binding to the 30S ribosomal subunits. Also involved in the hydrolysis of GTP during the formation of the 70S ribosomal complex. In Klebsiella pneumoniae subsp. pneumoniae (strain ATCC 700721 / MGH 78578), this protein is Translation initiation factor IF-2.